A 694-amino-acid polypeptide reads, in one-letter code: Probable methyltransferase PMT11 (694 aa).

The Cytoplasmic portion of the chain corresponds to 1–14; that stretch reads MKPLTNGDLFKSPT. Residues 15-32 form a helical; Signal-anchor for type II membrane protein membrane-spanning segment; that stretch reads LIKISALVFVTVAFFYLG. Residues 33–694 are Lumenal-facing; sequence KHWSDDGYQQ…LTCEKRLLRA (662 aa). N-linked (GlcNAc...) asparagine glycosylation is found at Asn69 and Asn77. A disordered region spans residues 83–128; it reads IPATIRQQPPSVVADTEKVKVEANPPPPPPPSPSPPPPPGPVKSFG. Residues 106–123 show a composition bias toward pro residues; it reads NPPPPPPPSPSPPPPPGP. Asn155, Asn378, and Asn423 each carry an N-linked (GlcNAc...) asparagine glycan.

It belongs to the methyltransferase superfamily.

The protein localises to the golgi apparatus membrane. The chain is Probable methyltransferase PMT11 from Arabidopsis thaliana (Mouse-ear cress).